The following is a 436-amino-acid chain: GTPase Der (436 aa).

2 EngA-type G domains span residues 4-167 and 176-351; these read PVIA…PKIE and IRFS…ESHS. GTP contacts are provided by residues 10–17, 57–61, 119–122, 182–189, 229–233, and 294–297; these read GRPNVGKS, DTGGI, NKVD, DTAGM, and NKWD. Positions 352-436 constitute a KH-like domain; the sequence is IRIQTNVLND…PIHIIARARD (85 aa).

The protein belongs to the TRAFAC class TrmE-Era-EngA-EngB-Septin-like GTPase superfamily. EngA (Der) GTPase family. As to quaternary structure, associates with the 50S ribosomal subunit.

Its function is as follows. GTPase that plays an essential role in the late steps of ribosome biogenesis. This is GTPase Der from Bacillus anthracis (strain A0248).